A 252-amino-acid polypeptide reads, in one-letter code: Imidazole glycerol phosphate synthase subunit HisF (252 aa).

Residues Asp-11 and Asp-130 contribute to the active site.

This sequence belongs to the HisA/HisF family. Heterodimer of HisH and HisF.

Its subcellular location is the cytoplasm. The enzyme catalyses 5-[(5-phospho-1-deoxy-D-ribulos-1-ylimino)methylamino]-1-(5-phospho-beta-D-ribosyl)imidazole-4-carboxamide + L-glutamine = D-erythro-1-(imidazol-4-yl)glycerol 3-phosphate + 5-amino-1-(5-phospho-beta-D-ribosyl)imidazole-4-carboxamide + L-glutamate + H(+). It participates in amino-acid biosynthesis; L-histidine biosynthesis; L-histidine from 5-phospho-alpha-D-ribose 1-diphosphate: step 5/9. IGPS catalyzes the conversion of PRFAR and glutamine to IGP, AICAR and glutamate. The HisF subunit catalyzes the cyclization activity that produces IGP and AICAR from PRFAR using the ammonia provided by the HisH subunit. This chain is Imidazole glycerol phosphate synthase subunit HisF, found in Bacillus velezensis (strain DSM 23117 / BGSC 10A6 / LMG 26770 / FZB42) (Bacillus amyloliquefaciens subsp. plantarum).